The following is a 213-amino-acid chain: Uridine kinase (213 aa).

Residue Gly14–Ser21 coordinates ATP.

It belongs to the uridine kinase family.

The protein resides in the cytoplasm. The catalysed reaction is uridine + ATP = UMP + ADP + H(+). It carries out the reaction cytidine + ATP = CMP + ADP + H(+). The protein operates within pyrimidine metabolism; CTP biosynthesis via salvage pathway; CTP from cytidine: step 1/3. Its pathway is pyrimidine metabolism; UMP biosynthesis via salvage pathway; UMP from uridine: step 1/1. The chain is Uridine kinase from Vibrio parahaemolyticus serotype O3:K6 (strain RIMD 2210633).